Consider the following 125-residue polypeptide: Large ribosomal subunit protein bL17 (125 aa).

It belongs to the bacterial ribosomal protein bL17 family. In terms of assembly, part of the 50S ribosomal subunit. Contacts protein L32.

This is Large ribosomal subunit protein bL17 from Marinomonas sp. (strain MWYL1).